We begin with the raw amino-acid sequence, 1182 residues long: Protein patched homolog 2 (1182 aa).

Residues 1–57 (MVRPLSLGELPPSYTPPARSSAPHILAGSLQAPLWLRAYFQGLLFSLGCRIQKHCGK) lie on the Cytoplasmic side of the membrane. The chain crosses the membrane as a helical span at residues 58-78 (VLFLGLVAFGALALGLRVAVI). The Extracellular segment spans residues 79-394 (ETDLEQLWVE…DILRAFSEVS (316 aa)). The N-linked (GlcNAc...) asparagine glycan is linked to Asn370. An SSD domain is found at 394 to 552 (STTRVVGGYL…MLVFPAILSL (159 aa)). The helical transmembrane segment at 395–414 (TTRVVGGYLLMLAYACVTML) threads the bilayer. Over 415–428 (RWDCAQSQGAVGLA) the chain is Cytoplasmic. A helical transmembrane segment spans residues 429-449 (GVLLVALAVASGLGLCALLGI). At 450 to 457 (TFNAATTQ) the chain is on the extracellular side. The helical transmembrane segment at 458–478 (VLPFLALGIGVDDIFLLAHAF) threads the bilayer. Residues 479–501 (TKAPPDTPLPERMGECLRSTGTS) are Cytoplasmic-facing. The helical transmembrane segment at 502–522 (VALTSVNNMVAFFMAALVPIP) threads the bilayer. The Extracellular portion of the chain corresponds to 523–531 (ALRAFSLQA). The chain crosses the membrane as a helical span at residues 532 to 552 (AIVVGCNFAAVMLVFPAILSL). Over 553–686 (DLRRRHRQRL…APLLLQTRAK (134 aa)) the chain is Cytoplasmic. A helical membrane pass occupies residues 687–707 (ALVLLFFGALLGLSLYGATLV). Residues 708–963 (QDGLALTDVV…WEQYLGLRRC (256 aa)) are Extracellular-facing. An N-linked (GlcNAc...) asparagine glycan is attached at Asn812. A helical transmembrane segment spans residues 964 to 984 (FLLAVCILLVCTFLVCALLLL). At 985 to 991 (SPWTAGL) the chain is on the cytoplasmic side. The chain crosses the membrane as a helical span at residues 992–1012 (IVLVLAMMTVELFGIMGFLGI). Lys1013 is a topological domain (extracellular). Residues 1014 to 1034 (LSAIPVVILVASIGIGVEFTV) form a helical membrane-spanning segment. Topologically, residues 1035–1064 (HVALGFLTSHGSRNLRAASALEQTFAPVTD) are cytoplasmic. Residues 1065–1085 (GAVSTLLGLLMLAGSNFDFII) traverse the membrane as a helical segment. Arg1086 is a topological domain (extracellular). A helical transmembrane segment spans residues 1087-1107 (YFFVVLTVLTLLGLLHGLLLL). Over 1108–1182 (PVLLSILGPP…YVHPASEEPT (75 aa)) the chain is Cytoplasmic.

This sequence belongs to the patched family. As to expression, expressed in epithelial cells of the developing hair, tooth and whisker.

The protein localises to the membrane. Functionally, plays a role in the control of cellular growth. May have a role in epidermal development. May act as a receptor for Sonic hedgehog (SHH). This chain is Protein patched homolog 2 (Ptch2), found in Mus musculus (Mouse).